The sequence spans 238 residues: CD209 antigen-like protein A (238 aa).

Residues 1–51 (MSDSKEMGKRQLRPLDEELLTSSHTRHSIKGFGFQTNSGFSSFTGCLVHSQ) lie on the Cytoplasmic side of the membrane. Residues 52 to 72 (VPLALQVLFLAVCSVLLVVIL) traverse the membrane as a helical; Signal-anchor for type II membrane protein segment. Residues 73–238 (VKVYKIPSSQ…KKLSTSCPSK (166 aa)) lie on the Extracellular side of the membrane. Cys-108 and Cys-119 form a disulfide bridge. The 115-residue stretch at 115–229 (FQGSCYFFSV…CTNKKFWICK (115 aa)) folds into the C-type lectin domain. The N-linked (GlcNAc...) asparagine glycan is linked to Asn-130. 2 cysteine pairs are disulfide-bonded: Cys-136-Cys-228 and Cys-207-Cys-220. Residues Glu-198, Asn-200, Leu-202, Glu-205, Asn-216, and Asp-217 each contribute to the Ca(2+) site. An N-linked (GlcNAc...) asparagine glycan is attached at Asn-216.

As to expression, predominantly expressed in dendritic cells. Detected at very low levels in lung, spleen, lymph nodes and bone marrow.

Its subcellular location is the membrane. Probable pathogen-recognition receptor. May mediate the endocytosis of pathogens which are subsequently degraded in lysosomal compartments. May recognize in a calcium-dependent manner high mannose N-linked oligosaccharides in a variety of pathogen antigens. This Mus musculus (Mouse) protein is CD209 antigen-like protein A (Cd209a).